Reading from the N-terminus, the 199-residue chain is MFISFEGTEGVGKTTLIRKIHQHFEEQGKQVVLTREPGGTPLAEQIRSMLLAVNHDENMSHDTELLLIYAARAQHLQQVILPALESNKIVLSDRFTDASFAYQCSGRGLSQDKLQLLNQNFVSRMPEVTFWLDAPIELGMNRARERGALDRFEQEKLSFFTKVREGYETLWKVEPERIKRLDATQSPDQVFEQALQYLA.

7 to 14 (GTEGVGKT) provides a ligand contact to ATP.

It belongs to the thymidylate kinase family.

The enzyme catalyses dTMP + ATP = dTDP + ADP. Functionally, phosphorylation of dTMP to form dTDP in both de novo and salvage pathways of dTTP synthesis. The sequence is that of Thymidylate kinase from Acinetobacter baumannii (strain ATCC 17978 / DSM 105126 / CIP 53.77 / LMG 1025 / NCDC KC755 / 5377).